A 229-amino-acid polypeptide reads, in one-letter code: Probable ribonuclease H (229 aa).

An RNase H type-1 domain is found at 42 to 164 (LQDISLEFDK…ADFLANSAAK (123 aa)). 3 residues coordinate a divalent metal cation: Glu60, Asp87, and Asp156.

This sequence belongs to the RNase H family. A divalent metal cation serves as cofactor.

It catalyses the reaction Endonucleolytic cleavage to 5'-phosphomonoester.. Functionally, endonuclease that specifically degrades the RNA of RNA-DNA hybrids. This is Probable ribonuclease H (RNH1) from Acanthamoeba polyphaga mimivirus (APMV).